The primary structure comprises 917 residues: Chitin synthase 1 (917 aa).

Residues 1-11 (MAYHGRGDGYD) are compositionally biased toward basic and acidic residues. A disordered region spans residues 1-56 (MAYHGRGDGYDGHQLQDLPGGHNQGDQHDDAQAPFLSENPMPYDNDRLGTDTPPVR). Over 1 to 570 (MAYHGRGDGY…YKSGHNIVRM (570 aa)) the chain is Extracellular. Asparagine 544 carries an N-linked (GlcNAc...) asparagine glycan. The helical transmembrane segment at 571-591 (FFFHVQLIYNIANVIFTWFSL) threads the bilayer. At 592 to 629 (ASYWLTTTVIMDLVGTPVTASSSSAEHHGWPFGDTVTP) the chain is on the cytoplasmic side. The chain crosses the membrane as a helical span at residues 630 to 650 (FFNAVLKYIYLAFVILQFILA). Residues 651–664 (LGNRPKGSKWTYIT) lie on the Extracellular side of the membrane. Residues 665–685 (SFFVFSLIQSYILVLSGYLVA) form a helical membrane-spanning segment. The Cytoplasmic portion of the chain corresponds to 686–716 (RAFSVPLDQQLQLDNAKDAMASLFGGSGSAG). A helical transmembrane segment spans residues 717–737 (VILVALVTIYGLYFLASFMYL). Residues 738–744 (DPWHMFH) lie on the Extracellular side of the membrane. A helical transmembrane segment spans residues 745–765 (SFPYYMLLMSTYINILMIYAF). Over 766 to 843 (NNWHDVSWGT…DLEDSYKSFR (78 aa)) the chain is Cytoplasmic. A helical transmembrane segment spans residues 844–864 (TMLVVSWLFSNCLLAVVITSD). The Extracellular segment spans residues 865 to 884 (NFNTFGIGQTASARTAWFFK). A helical transmembrane segment spans residues 885–905 (FLLFATGALSVIRFIGFCWFL). The Cytoplasmic portion of the chain corresponds to 906–917 (GRTGIMCCFARR).

The protein belongs to the chitin synthase family. Class III subfamily.

It is found in the cell membrane. It carries out the reaction [(1-&gt;4)-N-acetyl-beta-D-glucosaminyl](n) + UDP-N-acetyl-alpha-D-glucosamine = [(1-&gt;4)-N-acetyl-beta-D-glucosaminyl](n+1) + UDP + H(+). In terms of biological role, polymerizes chitin, a structural polymer of the cell wall and septum, by transferring the sugar moiety of UDP-GlcNAc to the non-reducing end of the growing chitin polymer. The sequence is that of Chitin synthase 1 (chs-1) from Neurospora crassa (strain ATCC 24698 / 74-OR23-1A / CBS 708.71 / DSM 1257 / FGSC 987).